The following is a 245-amino-acid chain: Polyhedrin (245 aa).

The protein belongs to the polyhedrin family.

Major component of the virus occlusion bodies, which are large proteinaceous structures (polyhedra), that protect the virus from the outside environment for extended periods until they are ingested by insect larvae. The polypeptide is Polyhedrin (PH) (Hyphantria cunea nuclear polyhedrosis virus (HcNPV)).